The sequence spans 82 residues: Mu-conotoxin MrVIA (82 aa).

Positions 1–22 are cleaved as a signal peptide; it reads MKLTCMMIVAVLFLTAWTLVMA. A propeptide spanning residues 23-49 is cleaved from the precursor; the sequence is DDSNNGLANHFSKSRDEMEDPEASKLE. 3 disulfides stabilise this stretch: Cys53–Cys71, Cys60–Cys76, and Cys70–Cys81.

In terms of tissue distribution, expressed by the venom duct.

Its subcellular location is the secreted. Functionally, muO-conotoxins are gating-modifier toxins that inhibit sodium current by trapping the domain II voltage sensor in the closed position to prevent opening of the sodium channel. This toxin inhibits rNav1.2/SCN2A (IC(50)=532 nM), rNav1.4/SCN4A (IC(50)=438 nM) and rNav1.7/SCN9A (IC(50)=345 nM). It blocks Nav channels by interacting mainly with the C-terminal part of the pore loop of domain-3. It does not bind on site 1. At small concentration, this toxin also acts as a calcium current agonist, whereas at higher doses it blocks fast-inactivating calcium current. This is Mu-conotoxin MrVIA from Conus marmoreus (Marble cone).